Reading from the N-terminus, the 336-residue chain is CENP-A histone chaperone scm3 (336 aa).

The segment at 243–269 is disordered; it reads RRRNPLLSSPKTPLRRSFSKSKVRNSN. A compositionally biased stretch (basic residues) spans 255 to 269; the sequence is PLRRSFSKSKVRNSN.

The protein localises to the cytoplasm. Its subcellular location is the nucleus. In terms of biological role, centromeric protein that plays a central role in the incorporation and maintenance of histone H3-like variant CENPA at centromeres. This chain is CENP-A histone chaperone scm3, found in Schizosaccharomyces pombe (strain 972 / ATCC 24843) (Fission yeast).